A 114-amino-acid chain; its full sequence is Cytochrome c oxidase assembly protein cox16, mitochondrial (114 aa).

The helical transmembrane segment at 29-49 (PFLLFGLPFMSVIVAGSFILT) threads the bilayer.

It belongs to the COX16 family.

The protein localises to the mitochondrion inner membrane. In terms of biological role, required for the assembly of the mitochondrial respiratory chain complex IV (CIV), also known as cytochrome c oxidase. May participate in merging the COX1 and COX2 assembly lines. The chain is Cytochrome c oxidase assembly protein cox16, mitochondrial (cox-9) from Neurospora crassa (strain ATCC 24698 / 74-OR23-1A / CBS 708.71 / DSM 1257 / FGSC 987).